The primary structure comprises 480 residues: Iroquois-class homeodomain protein IRX-1 (480 aa).

A DNA-binding region (homeobox; TALE-type) is located at residues 127 to 189 (DPGRPKNATR…NARRRLKKEN (63 aa)). Disordered regions lie at residues 190-285 (KVTW…LGLV), 318-354 (SLAE…PLQH), and 401-480 (PHGP…LPSA). Acidic residues predominate over residues 210 to 232 (TEGDPEKAEDDEEIDLESIDIDQ). At Ser241 the chain carries Phosphoserine. Over residues 254 to 263 (ARVAPPASAR) the composition is skewed to low complexity. Polar residues predominate over residues 264–280 (DQSSPLSAAETLKSQDS). A compositionally biased stretch (low complexity) spans 339-351 (SHASAHGPPSGSP).

It belongs to the TALE/IRO homeobox family. In terms of tissue distribution, expressed in specific and overlapping patterns with Irx1 and Irx2 in the developing and adult metanephric kidney. In the adult metanephros, renal expression is found in the loop of Henle in the S3 proximal tubule segment and in the thick ascending limb (TAL) of the distal tubule.

It is found in the nucleus. In Mus musculus (Mouse), this protein is Iroquois-class homeodomain protein IRX-1 (Irx1).